Reading from the N-terminus, the 205-residue chain is Lymphotoxin-alpha (205 aa).

The N-terminal stretch at 1–34 (MTPPGRLYLPRVRGTRLLFLLLGLLLALPPRAKG) is a signal peptide. A THD domain is found at 63-205 (PAAHLVGDPS…SSVFFGAFAL (143 aa)). N-linked (GlcNAc...) asparagine glycosylation is present at Asn96. Residues Cys120 and Cys156 are joined by a disulfide bond.

It belongs to the tumor necrosis factor family. In terms of assembly, homotrimer, and heterotrimer of either two LTB and one LTA subunits or (less prevalent) two LTA and one LTB subunits. Interacts with TNFRSF14.

It localises to the secreted. The protein localises to the membrane. In terms of biological role, cytokine that in its homotrimeric form binds to TNFRSF1A/TNFR1, TNFRSF1B/TNFBR and TNFRSF14/HVEM. In its heterotrimeric form with LTB binds to TNFRSF3/LTBR. Lymphotoxin is produced by lymphocytes and is cytotoxic for a wide range of tumor cells in vitro and in vivo. This is Lymphotoxin-alpha (LTA) from Marmota monax (Woodchuck).